We begin with the raw amino-acid sequence, 170 residues long: Der GTPase-activating protein YihI (170 aa).

Disordered stretches follow at residues 1 to 96 (MKKP…LSPQ) and 145 to 170 (LSYDDEEDEEEDEKQEDMMRLLRGGN). Over residues 20–30 (TREELNQEARD) the composition is skewed to basic and acidic residues. A compositionally biased stretch (basic residues) spans 31–40 (RKRLKKHRGH). Over residues 147-159 (YDDEEDEEEDEKQ) the composition is skewed to acidic residues.

This sequence belongs to the YihI family. Interacts with Der.

In terms of biological role, a GTPase-activating protein (GAP) that modifies Der/EngA GTPase function. May play a role in ribosome biogenesis. In Salmonella arizonae (strain ATCC BAA-731 / CDC346-86 / RSK2980), this protein is Der GTPase-activating protein YihI.